The sequence spans 208 residues: Putative proteasome subunit alpha type-4-B (208 aa).

It belongs to the peptidase T1A family. Component of the 20S core complex of the 26S proteasome. The 26S proteasome is composed of a core protease (CP), known as the 20S proteasome, capped at one or both ends by the 19S regulatory particle (RP/PA700). The 20S proteasome core is composed of 28 subunits that are arranged in four stacked rings, resulting in a barrel-shaped structure. The two end rings are each formed by seven alpha subunits, and the two central rings are each formed by seven beta subunits. The catalytic chamber with the active sites is on the inside of the barrel.

Its subcellular location is the cytoplasm. It localises to the nucleus. Its function is as follows. The proteasome is a multicatalytic proteinase complex which is characterized by its ability to cleave peptides with Arg, Phe, Tyr, Leu, and Glu adjacent to the leaving group at neutral or slightly basic pH. The proteasome has an ATP-dependent proteolytic activity. This is Putative proteasome subunit alpha type-4-B (PAC2) from Arabidopsis thaliana (Mouse-ear cress).